The primary structure comprises 291 residues: 33 kDa chaperonin (291 aa).

2 disulfides stabilise this stretch: cysteine 236–cysteine 238 and cysteine 269–cysteine 272.

The protein belongs to the HSP33 family. Under oxidizing conditions two disulfide bonds are formed involving the reactive cysteines. Under reducing conditions zinc is bound to the reactive cysteines and the protein is inactive.

Its subcellular location is the cytoplasm. Functionally, redox regulated molecular chaperone. Protects both thermally unfolding and oxidatively damaged proteins from irreversible aggregation. Plays an important role in the bacterial defense system toward oxidative stress. This chain is 33 kDa chaperonin, found in Lactobacillus johnsonii (strain CNCM I-12250 / La1 / NCC 533).